We begin with the raw amino-acid sequence, 160 residues long: D-aminoacyl-tRNA deacylase (160 aa).

Positions 137–138 match the Gly-cisPro motif, important for rejection of L-amino acids motif; the sequence is GP.

This sequence belongs to the DTD family. As to quaternary structure, homodimer.

It localises to the cytoplasm. It catalyses the reaction glycyl-tRNA(Ala) + H2O = tRNA(Ala) + glycine + H(+). The enzyme catalyses a D-aminoacyl-tRNA + H2O = a tRNA + a D-alpha-amino acid + H(+). Functionally, an aminoacyl-tRNA editing enzyme that deacylates mischarged D-aminoacyl-tRNAs. Also deacylates mischarged glycyl-tRNA(Ala), protecting cells against glycine mischarging by AlaRS. Acts via tRNA-based rather than protein-based catalysis; rejects L-amino acids rather than detecting D-amino acids in the active site. By recycling D-aminoacyl-tRNA to D-amino acids and free tRNA molecules, this enzyme counteracts the toxicity associated with the formation of D-aminoacyl-tRNA entities in vivo and helps enforce protein L-homochirality. The protein is D-aminoacyl-tRNA deacylase of Chloroflexus aurantiacus (strain ATCC 29364 / DSM 637 / Y-400-fl).